The sequence spans 132 residues: Small ribosomal subunit protein uS8 (132 aa).

Belongs to the universal ribosomal protein uS8 family. As to quaternary structure, part of the 30S ribosomal subunit. Contacts proteins S5 and S12.

Its function is as follows. One of the primary rRNA binding proteins, it binds directly to 16S rRNA central domain where it helps coordinate assembly of the platform of the 30S subunit. This Ureaplasma urealyticum serovar 10 (strain ATCC 33699 / Western) protein is Small ribosomal subunit protein uS8.